The following is a 446-amino-acid chain: Argininosuccinate lyase (446 aa).

It belongs to the lyase 1 family. Argininosuccinate lyase subfamily.

The protein localises to the cytoplasm. The enzyme catalyses 2-(N(omega)-L-arginino)succinate = fumarate + L-arginine. It participates in amino-acid biosynthesis; L-arginine biosynthesis; L-arginine from L-ornithine and carbamoyl phosphate: step 3/3. This chain is Argininosuccinate lyase, found in Parabacteroides distasonis (strain ATCC 8503 / DSM 20701 / CIP 104284 / JCM 5825 / NCTC 11152).